Reading from the N-terminus, the 407-residue chain is S-adenosylmethionine synthase (407 aa).

An ATP-binding site is contributed by His-15. Position 17 (Asp-17) interacts with Mg(2+). Glu-43 contacts K(+). Positions 56 and 99 each coordinate L-methionine. Residues 99-109 are flexible loop; sequence QSPDIARGVDT. The tract at residues 112–131 is disordered; it reads ERRGGGTAPGGPGDELDRQG. Residues 179–181, 252–253, Asp-261, 267–268, Ala-284, and Lys-288 each bind ATP; these read DGK, RF, and RK. Residue Asp-261 coordinates L-methionine. Lys-292 is a binding site for L-methionine.

Belongs to the AdoMet synthase family. Homotetramer; dimer of dimers. Requires Mg(2+) as cofactor. It depends on K(+) as a cofactor.

The protein localises to the cytoplasm. It carries out the reaction L-methionine + ATP + H2O = S-adenosyl-L-methionine + phosphate + diphosphate. The protein operates within amino-acid biosynthesis; S-adenosyl-L-methionine biosynthesis; S-adenosyl-L-methionine from L-methionine: step 1/1. Functionally, catalyzes the formation of S-adenosylmethionine (AdoMet) from methionine and ATP. The overall synthetic reaction is composed of two sequential steps, AdoMet formation and the subsequent tripolyphosphate hydrolysis which occurs prior to release of AdoMet from the enzyme. This Streptomyces fradiae (Streptomyces roseoflavus) protein is S-adenosylmethionine synthase.